The following is a 72-amino-acid chain: Heat-stable enterotoxin A3/A4 (72 aa).

The N-terminal stretch at 1-19 (MKKSILFIFLSVLSFSPFA) is a signal peptide. A propeptide spanning residues 20–53 (QDAKPVESSKEKITLESKKCNIAKKSNKSGPESM) is cleaved from the precursor. 3 cysteine pairs are disulfide-bonded: C59–C64, C60–C68, and C63–C71.

The protein belongs to the heat-stable enterotoxin family.

The protein localises to the secreted. In terms of biological role, toxin which activates the particulate form of guanylate cyclase and increases cyclic GMP levels within the host intestinal epithelial cells. The polypeptide is Heat-stable enterotoxin A3/A4 (sta3) (Escherichia coli).